A 236-amino-acid chain; its full sequence is Sugar fermentation stimulation protein homolog (236 aa).

The protein belongs to the SfsA family.

This chain is Sugar fermentation stimulation protein homolog, found in Synechococcus elongatus (strain ATCC 33912 / PCC 7942 / FACHB-805) (Anacystis nidulans R2).